The following is a 704-amino-acid chain: Elongation factor G (704 aa).

One can recognise a tr-type G domain in the interval 8–290 (ARYRNIGISA…AVVDYLPSPV (283 aa)). GTP-binding positions include 17 to 24 (AHIDAGKT), 88 to 92 (DTPGH), and 142 to 145 (NKMD).

The protein belongs to the TRAFAC class translation factor GTPase superfamily. Classic translation factor GTPase family. EF-G/EF-2 subfamily.

The protein resides in the cytoplasm. In terms of biological role, catalyzes the GTP-dependent ribosomal translocation step during translation elongation. During this step, the ribosome changes from the pre-translocational (PRE) to the post-translocational (POST) state as the newly formed A-site-bound peptidyl-tRNA and P-site-bound deacylated tRNA move to the P and E sites, respectively. Catalyzes the coordinated movement of the two tRNA molecules, the mRNA and conformational changes in the ribosome. The sequence is that of Elongation factor G from Pectobacterium carotovorum subsp. carotovorum (strain PC1).